The sequence spans 956 residues: Calsyntenin-3 (956 aa).

A signal peptide spans 1–20 (MARMSFLSFLLFCLTSVAHG). The Extracellular segment spans residues 21-850 (NKANKHKPWI…PHRNSVVPGA (830 aa)). Cadherin domains lie at 30 to 151 (IETE…SPVF) and 152 to 271 (VERR…IPLF). Residues Asn333, Asn353, Asn513, and Asn743 are each glycosylated (N-linked (GlcNAc...) asparagine). Residues 851–871 (ATVIIMVCVGFLVVMVILGVF) form a helical membrane-spanning segment. Residues 872–956 (RIRSIHRRGE…EGRDSAPRRY (85 aa)) are Cytoplasmic-facing. Acidic residues predominate over residues 921–937 (GECEDEEEVVDSPDDTS). The disordered stretch occupies residues 921–956 (GECEDEEEVVDSPDDTSDDQRIIIKKEGRDSAPRRY). A compositionally biased stretch (basic and acidic residues) spans 938-956 (DDQRIIIKKEGRDSAPRRY).

The protein belongs to the calsyntenin family. As to quaternary structure, homooligomer and heterooligomer; mediates both homophilic and heterophilc interactions with clstn1 and clstn2 paralogs via cadherin domains. Interacts (via cadherin domains) with both alpha and beta isoforms of neurexins. As to expression, by 48 hours post-fertilization (hpf), widely expressed in the brain, with strong expression in the telencephalon and the midbrain. Not expressed in the optic tectum.

It is found in the postsynaptic cell membrane. It localises to the endoplasmic reticulum membrane. The protein resides in the golgi apparatus membrane. Functionally, synaptic adhesion molecule. Promotes synapse development by acting as a cell adhesion molecule at the postsynaptic membrane, which associates with presynaptic neurexins. The polypeptide is Calsyntenin-3 (Danio rerio (Zebrafish)).